A 433-amino-acid chain; its full sequence is Probable mannan endo-1,4-beta-mannosidase F (433 aa).

An N-terminal signal peptide occupies residues 1-19; it reads MKRQALTLIPLLGAAAAQS. Residues 20-53 form the CBM1 domain; the sequence is GPYGQCGGNDWSGATTCVSGYVCVYQNEWYSQCV. Residues 56–82 are thr-rich linker; that stretch reads TATSSSTTLTTTTSATTRTTTTTTSTT. Positions 83–433 are catalytic; sequence SVPSSTNFPS…TEHMERIAAR (351 aa). Asn-97 is a glycosylation site (N-linked (GlcNAc...) asparagine). The substrate site is built by Trp-142 and Asn-255. Glu-256 (proton donor) is an active-site residue. Substrate is bound at residue Tyr-331. Glu-364 acts as the Nucleophile in catalysis. Trp-394 lines the substrate pocket.

Belongs to the glycosyl hydrolase 5 (cellulase A) family.

The protein resides in the secreted. The catalysed reaction is Random hydrolysis of (1-&gt;4)-beta-D-mannosidic linkages in mannans, galactomannans and glucomannans.. Endo-1,4-mannanase, a crucial enzyme for depolymerization of seed galactomannans and wood galactoglucomannans. The protein is Probable mannan endo-1,4-beta-mannosidase F (manF) of Emericella nidulans (strain FGSC A4 / ATCC 38163 / CBS 112.46 / NRRL 194 / M139) (Aspergillus nidulans).